The sequence spans 496 residues: Membrane-bound lytic murein transglycosylase F (496 aa).

The first 31 residues, 1-31, serve as a signal peptide directing secretion; that stretch reads MPIFSTRVLTYLRCIFRLFIGLMLLLTLVGC. The tract at residues 32–271 is non-LT domain; sequence DFYTPSSQLE…KLDEKYFGHV (240 aa). An LT domain region spans residues 273 to 496; the sequence is NFDFVDTRTF…AEVVKQITLR (224 aa). The active site involves Glu316. The tract at residues 464-485 is disordered; the sequence is HRREELDEDDSSEPQSTERPTV.

The protein in the N-terminal section; belongs to the bacterial solute-binding protein 3 family. This sequence in the C-terminal section; belongs to the transglycosylase Slt family.

It localises to the cell outer membrane. The catalysed reaction is Exolytic cleavage of the (1-&gt;4)-beta-glycosidic linkage between N-acetylmuramic acid (MurNAc) and N-acetylglucosamine (GlcNAc) residues in peptidoglycan, from either the reducing or the non-reducing ends of the peptidoglycan chains, with concomitant formation of a 1,6-anhydrobond in the MurNAc residue.. In terms of biological role, murein-degrading enzyme that degrades murein glycan strands and insoluble, high-molecular weight murein sacculi, with the concomitant formation of a 1,6-anhydromuramoyl product. Lytic transglycosylases (LTs) play an integral role in the metabolism of the peptidoglycan (PG) sacculus. Their lytic action creates space within the PG sacculus to allow for its expansion as well as for the insertion of various structures such as secretion systems and flagella. In Aeromonas salmonicida (strain A449), this protein is Membrane-bound lytic murein transglycosylase F.